The primary structure comprises 358 residues: Peptide chain release factor 1 (358 aa).

An N5-methylglutamine modification is found at Q233.

The protein belongs to the prokaryotic/mitochondrial release factor family. In terms of processing, methylated by PrmC. Methylation increases the termination efficiency of RF1.

It localises to the cytoplasm. Peptide chain release factor 1 directs the termination of translation in response to the peptide chain termination codons UAG and UAA. This Lysinibacillus sphaericus (strain C3-41) protein is Peptide chain release factor 1.